We begin with the raw amino-acid sequence, 157 residues long: MQFTTIASLFAAAGLAAAAPLESRQDTASCPVTTEGDYVWKISEFYGRKPEGTYYNSLGFNIKATNGGTLDFTCSAQADKLEDHKWYSCGENSFMDFSFDSDRSGLLLKQKVSDDITYVATATLPNYCRAGGNGPKDFVCQGVADAYITLVTLPKSS.

Residues 1-18 (MQFTTIASLFAAAGLAAA) form the signal peptide. The region spanning 35 to 153 (EGDYVWKISE…ADAYITLVTL (119 aa)) is the AA1-like domain. 2 disulfides stabilise this stretch: C74–C89 and C128–C140.

It belongs to the ALTA1 family. As to quaternary structure, homodimer; disulfide-linked.

It localises to the spore wall. The protein resides in the secreted. Its function is as follows. May bind and inhibit the beta-glucanase activity of host plant thaumatin-like proteins. This Alternaria alternata (Alternaria rot fungus) protein is Major allergen Alt a 1 (ALTA1).